A 268-amino-acid polypeptide reads, in one-letter code: Indole-3-glycerol phosphate synthase (268 aa).

This sequence belongs to the TrpC family.

The enzyme catalyses 1-(2-carboxyphenylamino)-1-deoxy-D-ribulose 5-phosphate + H(+) = (1S,2R)-1-C-(indol-3-yl)glycerol 3-phosphate + CO2 + H2O. The protein operates within amino-acid biosynthesis; L-tryptophan biosynthesis; L-tryptophan from chorismate: step 4/5. The polypeptide is Indole-3-glycerol phosphate synthase (Magnetococcus marinus (strain ATCC BAA-1437 / JCM 17883 / MC-1)).